A 174-amino-acid chain; its full sequence is FMN reductase (NADH) SmoA (174 aa).

Belongs to the non-flavoprotein flavin reductase family.

It catalyses the reaction FMNH2 + NAD(+) = FMN + NADH + 2 H(+). Part of the sulfoquinovose monooxygenase (sulfo-SMO) pathway, a D-sulfoquinovose degradation pathway that enables the complete utilization of all carbons within sulfoquinovose (SQ) with concomitant production of inorganic sulfite. Catalyzes the NADH-dependent reduction of FMN. FMNH(2) is then transferred to the sulfoquinovose monooxygenase SmoC. This Agrobacterium fabrum (strain C58 / ATCC 33970) (Agrobacterium tumefaciens (strain C58)) protein is FMN reductase (NADH) SmoA.